The primary structure comprises 185 residues: Pyridoxal 5'-phosphate synthase subunit PdxT (185 aa).

46-48 (GES) is an L-glutamine binding site. C78 serves as the catalytic Nucleophile. L-glutamine contacts are provided by residues R106 and 132–133 (IR). Residues H168 and E170 each act as charge relay system in the active site.

This sequence belongs to the glutaminase PdxT/SNO family. In the presence of PdxS, forms a dodecamer of heterodimers. Only shows activity in the heterodimer.

It catalyses the reaction aldehydo-D-ribose 5-phosphate + D-glyceraldehyde 3-phosphate + L-glutamine = pyridoxal 5'-phosphate + L-glutamate + phosphate + 3 H2O + H(+). The enzyme catalyses L-glutamine + H2O = L-glutamate + NH4(+). Its pathway is cofactor biosynthesis; pyridoxal 5'-phosphate biosynthesis. Functionally, catalyzes the hydrolysis of glutamine to glutamate and ammonia as part of the biosynthesis of pyridoxal 5'-phosphate. The resulting ammonia molecule is channeled to the active site of PdxS. In Corynebacterium diphtheriae (strain ATCC 700971 / NCTC 13129 / Biotype gravis), this protein is Pyridoxal 5'-phosphate synthase subunit PdxT.